The following is a 444-amino-acid chain: Methylenetetrahydrofolate--tRNA-(uracil-5-)-methyltransferase TrmFO (444 aa).

Residue 10–15 (GAGLAG) participates in FAD binding.

This sequence belongs to the MnmG family. TrmFO subfamily. FAD is required as a cofactor.

The protein localises to the cytoplasm. It catalyses the reaction uridine(54) in tRNA + (6R)-5,10-methylene-5,6,7,8-tetrahydrofolate + NADH + H(+) = 5-methyluridine(54) in tRNA + (6S)-5,6,7,8-tetrahydrofolate + NAD(+). The enzyme catalyses uridine(54) in tRNA + (6R)-5,10-methylene-5,6,7,8-tetrahydrofolate + NADPH + H(+) = 5-methyluridine(54) in tRNA + (6S)-5,6,7,8-tetrahydrofolate + NADP(+). Functionally, catalyzes the folate-dependent formation of 5-methyl-uridine at position 54 (M-5-U54) in all tRNAs. This is Methylenetetrahydrofolate--tRNA-(uracil-5-)-methyltransferase TrmFO from Streptococcus uberis (strain ATCC BAA-854 / 0140J).